Reading from the N-terminus, the 166-residue chain is Putative 4-hydroxy-4-methyl-2-oxoglutarate aldolase (166 aa).

Substrate contacts are provided by residues 74–77 and R96; that span reads GDQI. D97 contacts a divalent metal cation.

The protein belongs to the class II aldolase/RraA-like family. In terms of assembly, homotrimer. It depends on a divalent metal cation as a cofactor.

The enzyme catalyses 4-hydroxy-4-methyl-2-oxoglutarate = 2 pyruvate. The catalysed reaction is oxaloacetate + H(+) = pyruvate + CO2. Functionally, catalyzes the aldol cleavage of 4-hydroxy-4-methyl-2-oxoglutarate (HMG) into 2 molecules of pyruvate. Also contains a secondary oxaloacetate (OAA) decarboxylase activity due to the common pyruvate enolate transition state formed following C-C bond cleavage in the retro-aldol and decarboxylation reactions. The sequence is that of Putative 4-hydroxy-4-methyl-2-oxoglutarate aldolase from Xanthomonas campestris pv. campestris (strain B100).